Consider the following 485-residue polypeptide: MRRRVCTVVRAVVCLLSTSLLTTCDFTGIFAAIQSEVPIKTPSIPGAIYGLVKAGSKLYATNGRLWEKELNGTGSWQKVSSSSVPTDSDKKVMSIATDGNTFVLACVPGTGVYKHCVNGAGSSSTGTTASPSTETCSQHATLVGGTSKPFWLVPGGTGNNGNCGCGGGGGGSSSSSSSCIHIWLVPGGTGNNGNCGCGGGGGGSSSSSSSCIHIKVENTDEQFLDMGEGYVVTTKHLYTKNGSSSAGPAQCPGGGGGGGSSGGGGSSEYTKASCSFSTPILASVSDGCYHYILTKEKVYCRKQDTASSAASSPAQCPSSPSSSSSSSTNAGCEVAHGVDDPLCLAIFKHNGCEYLLIGGSRGYGEIKLEANSSGTNGTCMRLKESNVHKSPGQWGESSPTPKASAEQYRGTVGRFAVQKIYVVEKNGGGNGVAAGGAGCPANASSSSGGTSSTQRPDLYAAVGESSDTYTGLWKFDTTTCSWNRE.

Positions 1-23 (MRRRVCTVVRAVVCLLSTSLLTT) are cleaved as a signal peptide. Residue cysteine 24 is the site of N-palmitoyl cysteine attachment. Cysteine 24 carries S-diacylglycerol cysteine lipidation. A compositionally biased stretch (low complexity) spans 308–327 (SAASSPAQCPSSPSSSSSSS). The interval 308–331 (SAASSPAQCPSSPSSSSSSSTNAG) is disordered.

Belongs to the TP013X lipoprotein family.

The protein localises to the cell membrane. This is an uncharacterized protein from Treponema pallidum (strain Nichols).